The sequence spans 304 residues: Murein tetrapeptide carboxypeptidase (304 aa).

The active-site Nucleophile is Ser-106. Active-site charge relay system residues include Glu-200 and His-270.

It belongs to the peptidase S66 family.

The protein localises to the cytoplasm. The enzyme catalyses N-acetyl-D-glucosaminyl-N-acetylmuramoyl-L-alanyl-meso-2,6-diaminoheptanedioyl-D-alanine + H2O = N-acetyl-D-glucosaminyl-N-acetylmuramoyl-L-alanyl-meso-2,6-diaminoheptanedioate + D-alanine. The protein operates within cell wall biogenesis; peptidoglycan recycling. Its activity is regulated as follows. Inhibited by beta-lactams containing a D-amino acid side chain. Releases the terminal D-alanine residue from the cytoplasmic tetrapeptide recycling product L-Ala-gamma-D-Glu-meso-Dap-D-Ala. To a lesser extent, can also cleave D-Ala from murein derivatives containing the tetrapeptide, i.e. MurNAc-tetrapeptide, UDP-MurNAc-tetrapeptide, GlcNAc-MurNAc-tetrapeptide, and GlcNAc-anhMurNAc-tetrapeptide. Does not act on murein sacculi or cross-linked muropeptides. The tripeptides produced by the LcdA reaction can then be reused as peptidoglycan building blocks; LcdA is thereby involved in murein recycling. Is also essential for viability during stationary phase. The sequence is that of Murein tetrapeptide carboxypeptidase (ldcA) from Escherichia coli (strain K12).